The primary structure comprises 312 residues: Acetyl-coenzyme A carboxylase carboxyl transferase subunit alpha (312 aa).

The region spanning 25-286 (GDDSAVEILK…GNYIIEKLNE (262 aa)) is the CoA carboxyltransferase C-terminal domain.

The protein belongs to the AccA family. Acetyl-CoA carboxylase is a heterohexamer composed of biotin carboxyl carrier protein (AccB), biotin carboxylase (AccC) and two subunits each of ACCase subunit alpha (AccA) and ACCase subunit beta (AccD).

It is found in the cytoplasm. It carries out the reaction N(6)-carboxybiotinyl-L-lysyl-[protein] + acetyl-CoA = N(6)-biotinyl-L-lysyl-[protein] + malonyl-CoA. It participates in lipid metabolism; malonyl-CoA biosynthesis; malonyl-CoA from acetyl-CoA: step 1/1. Component of the acetyl coenzyme A carboxylase (ACC) complex. First, biotin carboxylase catalyzes the carboxylation of biotin on its carrier protein (BCCP) and then the CO(2) group is transferred by the carboxyltransferase to acetyl-CoA to form malonyl-CoA. In Campylobacter hominis (strain ATCC BAA-381 / DSM 21671 / CCUG 45161 / LMG 19568 / NCTC 13146 / CH001A), this protein is Acetyl-coenzyme A carboxylase carboxyl transferase subunit alpha.